Here is a 379-residue protein sequence, read N- to C-terminus: Cytochrome b (379 aa).

Helical transmembrane passes span 33 to 53, 77 to 98, 113 to 133, and 178 to 198; these read FGSL…FLAM, WTIR…FIHV, WNVG…GYVL, and FFAL…IHLL. Heme b contacts are provided by histidine 83 and histidine 97. Residues histidine 182 and histidine 196 each coordinate heme b. Histidine 201 contacts a ubiquinone. The next 4 membrane-spanning stretches (helical) occupy residues 226-246, 288-308, 320-340, and 347-367; these read TKDF…TLFY, LGGV…PLLQ, LSQF…WIGG, and FITI…LIMP.

Belongs to the cytochrome b family. In terms of assembly, the cytochrome bc1 complex contains 11 subunits: 3 respiratory subunits (MT-CYB, CYC1 and UQCRFS1), 2 core proteins (UQCRC1 and UQCRC2) and 6 low-molecular weight proteins (UQCRH/QCR6, UQCRB/QCR7, UQCRQ/QCR8, UQCR10/QCR9, UQCR11/QCR10 and a cleavage product of UQCRFS1). This cytochrome bc1 complex then forms a dimer. It depends on heme b as a cofactor.

The protein localises to the mitochondrion inner membrane. Its function is as follows. Component of the ubiquinol-cytochrome c reductase complex (complex III or cytochrome b-c1 complex) that is part of the mitochondrial respiratory chain. The b-c1 complex mediates electron transfer from ubiquinol to cytochrome c. Contributes to the generation of a proton gradient across the mitochondrial membrane that is then used for ATP synthesis. The polypeptide is Cytochrome b (MT-CYB) (Lepilemur edwardsi (Milne-Edwards's sportive lemur)).